Consider the following 287-residue polypeptide: MSLPLGVPRRAFSYDDALEDTAPMTPPPADLCANVLWKQPVIPERKYQELAKIEEGDANMNAPVITPSSSTESVNKVPVVKAKATHIIMNSLITKQTQESIQRFEQQAGLRDAGYTPHKGLTAEETKYHRVAEAVHKLKMQSGETTKDDKQTSSAQSTPSSTPHSSPKHKNRGWFSQGSSASITAPDFVAMEAGGDRLPSERWSFFGPKAIQKSTNDPGGFTIQSYKGAQKPSPMELMRAQATRMTEDPVTFKPPKMDIPVTEGRKQSSHSHNIKPRDLNVLTPTGF.

Residues 50 to 60 (LAKIEEGDANM) carry the Flavin-containing monooxygenase motif motif. Disordered regions lie at residues 139–179 (KMQS…SQGS) and 245–287 (MTED…PTGF). The segment covering 152–165 (TSSAQSTPSSTPHS) has biased composition (low complexity).

Belongs to the P33MONOX family.

The protein localises to the cytoplasm. Potential NADPH-dependent oxidoreductase. May be involved in the regulation of neuronal survival, differentiation and axonal outgrowth. This is Putative monooxygenase p33MONOX (P33MONOX) from Gallus gallus (Chicken).